The sequence spans 177 residues: ATP synthase subunit delta (177 aa).

This sequence belongs to the ATPase delta chain family. In terms of assembly, F-type ATPases have 2 components, F(1) - the catalytic core - and F(0) - the membrane proton channel. F(1) has five subunits: alpha(3), beta(3), gamma(1), delta(1), epsilon(1). F(0) has three main subunits: a(1), b(2) and c(10-14). The alpha and beta chains form an alternating ring which encloses part of the gamma chain. F(1) is attached to F(0) by a central stalk formed by the gamma and epsilon chains, while a peripheral stalk is formed by the delta and b chains.

It is found in the cell membrane. Its function is as follows. F(1)F(0) ATP synthase produces ATP from ADP in the presence of a proton or sodium gradient. F-type ATPases consist of two structural domains, F(1) containing the extramembraneous catalytic core and F(0) containing the membrane proton channel, linked together by a central stalk and a peripheral stalk. During catalysis, ATP synthesis in the catalytic domain of F(1) is coupled via a rotary mechanism of the central stalk subunits to proton translocation. Functionally, this protein is part of the stalk that links CF(0) to CF(1). It either transmits conformational changes from CF(0) to CF(1) or is implicated in proton conduction. This Buchnera aphidicola subsp. Acyrthosiphon pisum (strain 5A) protein is ATP synthase subunit delta.